Consider the following 104-residue polypeptide: Glutaredoxin (104 aa).

The region spanning 3-103 (MIKAQELVSS…PLLTEAGAVK (101 aa)) is the Glutaredoxin domain. An intrachain disulfide couples Cys-23 to Cys-26.

The protein belongs to the glutaredoxin family. CPYC subfamily.

It localises to the cytoplasm. Functionally, has a glutathione-disulfide oxidoreductase activity in the presence of NADPH and glutathione reductase. Reduces low molecular weight disulfides and proteins. This chain is Glutaredoxin, found in Vernicia fordii (Tung).